A 336-amino-acid polypeptide reads, in one-letter code: F420-dependent glucose-6-phosphate dehydrogenase (336 aa).

Aspartate 39 provides a ligand contact to coenzyme F420-(gamma-Glu)n. Catalysis depends on histidine 40, which acts as the Proton donor. Coenzyme F420-(gamma-Glu)n contacts are provided by residues threonine 76 and 107–108; that span reads TG. Catalysis depends on glutamate 109, which acts as the Proton acceptor. Coenzyme F420-(gamma-Glu)n contacts are provided by residues asparagine 112, 177–178, and 180–181; these read GG and AV. Substrate is bound by residues threonine 195, lysine 198, lysine 259, and arginine 283.

The protein belongs to the F420-dependent glucose-6-phosphate dehydrogenase family. In terms of assembly, homodimer.

It catalyses the reaction oxidized coenzyme F420-(gamma-L-Glu)(n) + D-glucose 6-phosphate + H(+) = 6-phospho-D-glucono-1,5-lactone + reduced coenzyme F420-(gamma-L-Glu)(n). In terms of biological role, catalyzes the coenzyme F420-dependent oxidation of glucose 6-phosphate (G6P) to 6-phosphogluconolactone. Appears to have a role in resistance to oxidative stress, via its consumption of G6P that serves as a source of reducing power to combat oxidative stress in mycobacteria. More precisely, is likely involved in a F420-dependent anti-oxidant mechanism that protects M.tuberculosis against oxidative stress and bactericidal agents. Is essential for the bioreductive activation of the bicyclic 4-nitroimidazole prodrug PA-824 (nitroimidazo-oxazine) developed for anti-tuberculosis therapy against both replicating and persistent bacteria. It does not interact directly with PA-824 but, rather, provides reduced F420 to the deazaflavin-dependent nitroreductase Ddn, which in turn activates PA-824. The sequence is that of F420-dependent glucose-6-phosphate dehydrogenase (fgd1) from Mycobacterium tuberculosis (strain CDC 1551 / Oshkosh).